We begin with the raw amino-acid sequence, 434 residues long: D-amino acid dehydrogenase (434 aa).

Residue 3–17 (VVILGSGVVGVTSAW) participates in FAD binding.

The protein belongs to the DadA oxidoreductase family. It depends on FAD as a cofactor.

It carries out the reaction a D-alpha-amino acid + A + H2O = a 2-oxocarboxylate + AH2 + NH4(+). It functions in the pathway amino-acid degradation; D-alanine degradation; NH(3) and pyruvate from D-alanine: step 1/1. Its function is as follows. Oxidative deamination of D-amino acids. The protein is D-amino acid dehydrogenase of Yersinia pseudotuberculosis serotype O:1b (strain IP 31758).